The sequence spans 270 residues: Hydroxyethylthiazole kinase (270 aa).

M46 is a substrate binding site. Residues R120 and T166 each contribute to the ATP site. G193 is a binding site for substrate.

The protein belongs to the Thz kinase family. Requires Mg(2+) as cofactor.

It carries out the reaction 5-(2-hydroxyethyl)-4-methylthiazole + ATP = 4-methyl-5-(2-phosphooxyethyl)-thiazole + ADP + H(+). It functions in the pathway cofactor biosynthesis; thiamine diphosphate biosynthesis; 4-methyl-5-(2-phosphoethyl)-thiazole from 5-(2-hydroxyethyl)-4-methylthiazole: step 1/1. In terms of biological role, catalyzes the phosphorylation of the hydroxyl group of 4-methyl-5-beta-hydroxyethylthiazole (THZ). The protein is Hydroxyethylthiazole kinase of Herpetosiphon aurantiacus (strain ATCC 23779 / DSM 785 / 114-95).